The following is a 613-amino-acid chain: Proteasome-associated ATPase (613 aa).

Residues 1–29 (MSESERSEGFPEGFAGAGSGSLSSEDAAE) form a disordered region. Residues 23 to 100 (SSEDAAELEA…LREEVDRLGQ (78 aa)) adopt a coiled-coil conformation. 300 to 305 (GCGKTL) serves as a coordination point for ATP. Residue lysine 595 forms an Isoglutamyl lysine isopeptide (Lys-Gln) (interchain with Q-Cter in protein Pup) linkage. Residues 612-613 (YL) are docks into pockets in the proteasome alpha-ring.

The protein belongs to the AAA ATPase family. As to quaternary structure, homohexamer. Assembles into a hexameric ring structure that caps the 20S proteasome core. Strongly interacts with the prokaryotic ubiquitin-like protein Pup through a hydrophobic interface; the interacting region of ARC lies in its N-terminal coiled-coil domain. There is one Pup binding site per ARC hexamer ring. Upon ATP-binding, the C-terminus of ARC interacts with the alpha-rings of the proteasome core, possibly by binding to the intersubunit pockets.

The protein operates within protein degradation; proteasomal Pup-dependent pathway. Functionally, ATPase which is responsible for recognizing, binding, unfolding and translocation of pupylated proteins into the bacterial 20S proteasome core particle. May be essential for opening the gate of the 20S proteasome via an interaction with its C-terminus, thereby allowing substrate entry and access to the site of proteolysis. Thus, the C-termini of the proteasomal ATPase may function like a 'key in a lock' to induce gate opening and therefore regulate proteolysis. The sequence is that of Proteasome-associated ATPase from Mycolicibacterium smegmatis (strain ATCC 700084 / mc(2)155) (Mycobacterium smegmatis).